We begin with the raw amino-acid sequence, 268 residues long: Tryptophan synthase alpha chain (268 aa).

Residues glutamate 49 and aspartate 60 each act as proton acceptor in the active site.

It belongs to the TrpA family. In terms of assembly, tetramer of two alpha and two beta chains.

It catalyses the reaction (1S,2R)-1-C-(indol-3-yl)glycerol 3-phosphate + L-serine = D-glyceraldehyde 3-phosphate + L-tryptophan + H2O. It participates in amino-acid biosynthesis; L-tryptophan biosynthesis; L-tryptophan from chorismate: step 5/5. Its function is as follows. The alpha subunit is responsible for the aldol cleavage of indoleglycerol phosphate to indole and glyceraldehyde 3-phosphate. The sequence is that of Tryptophan synthase alpha chain from Escherichia coli (strain ATCC 8739 / DSM 1576 / NBRC 3972 / NCIMB 8545 / WDCM 00012 / Crooks).